The chain runs to 1171 residues: MPKQTLDGNTAAAHVAYAMSEVATIYPITPSSPMAEIADEWAAHGRKNIFGKTLQVAEMQSEAGAAGAVHGSLAAGALTTTFTASQGLLLMIPNMYKIAGELLPCVFHVAARALSTHALSIFGDHADVMAARQTGFAMLSSASVQEVMDLALVAHLATLKARVPFVHFFDGFRTSHEVQKIDVIEYEDMAKLVDWDAIRAFRQRALNPEHPHQRGTAQNPDIYFQSREAANPYYLATPGIVAQVMEQVAGLTGRHYHLFDYAGAPDAERVIVSMGSSCEVIEETVNYLVEKGEKVGLIKVRLFRPFSAEHFLKVLPASVKRIAVLDRTKEPGSLGEPLYEDVQTVLAEHGKNILVVGGRYGLGSKEFNPSMVKAVFDNLAATTPKNKFTVGITDDVTHTSLEIKEHIDTSPKGTFRCKFFGLGSDGTVGANKNSIKIIGDHTDMYAQGYFVYDSKKSGGVTISHLRFGKQPIQSAYLIDQADLIACHNPSYVGRYNLLEGIKPGGIFLLNSTWSAEEMDSRLPADMKRTIATKKLKFYNIDAVKIAQEIGLGSRINVIMQTAFFKIANVIPVDEAIKYIKDSIVKTYGKKGDKILNMNFAAVDRALEALEEIKYPASWADAVDEAAATVTEEPEFIQKVLRPINALKGDELPVSTFTPDGVFPVGTTKYEKRGIAVNIPQWQPENCIQCNQCSLVCPHAAIRPYLAKPADLAGAPETFVTKDAIGKEAAGLKFRIQVSPLDCTGCGNCADVCPAKVKALTMVPLEEVTAVEEANYNFAEQLPEVKVNFNPATVKGSQFRQPLLEFSGACAGCGETPYVKLVTQLFGDRMIIANATGCSSIWGGSAPACPYTVNRQGHGPAWASSLFEDNAEFGYGMALAVAKRQDELATAISKALEAPVSAAFKAACEGWLAGKDDADRSREYGDRIKALLPGEISQASGEVKDLLLDIDRQKDYLTKKSIWIIGGDGWAYDIGYGGLDHVLASGANVNVLVLDTEVYSNTGGQSSKATQTGAVARFAAGGKFTKKKDLGLMAMSYGYVYVASVAMGASHSQLMKALIEAEKYDGPSLIIAYAPCINHGINMTYSQREAKKAVEAGYWPLYRYNPQLAQEGKNPFILDYKTPTASFRDFLMGEIRYTSLKKQFPEKAEQLFAKAEADAKARLEQYKKLAEG.

Residues threonine 29 and arginine 112 each coordinate pyruvate. CoA is bound by residues 424–428 (SDGTV), lysine 456, asparagine 556, and asparagine 598. 4Fe-4S ferredoxin-type domains lie at 677-706 (NIPQ…PYLA) and 733-764 (FRIQ…MVPL). 10 residues coordinate [4Fe-4S] cluster: cysteine 686, cysteine 689, cysteine 692, cysteine 696, cysteine 742, cysteine 745, cysteine 748, cysteine 752, cysteine 809, and cysteine 812. Residues glutamate 814, cysteine 837, 967–969 (DGW), and 995–1000 (TEVYSN) contribute to the thiamine diphosphate site. Cysteine 837 provides a ligand contact to [4Fe-4S] cluster. Mg(2+) contacts are provided by aspartate 967, threonine 995, and valine 997. A pyruvate-binding site is contributed by asparagine 1000. Cysteine 1075 is a binding site for [4Fe-4S] cluster.

The protein belongs to the pyruvate:ferredoxin/flavodoxin oxidoreductase family. Homodimer. It depends on [4Fe-4S] cluster as a cofactor. Thiamine diphosphate serves as cofactor. The cofactor is Mg(2+).

The enzyme catalyses 2 oxidized [2Fe-2S]-[ferredoxin] + pyruvate + CoA = 2 reduced [2Fe-2S]-[ferredoxin] + acetyl-CoA + CO2 + H(+). In terms of biological role, catalyzes the oxidative decarboxylation of pyruvate to acetyl-CoA and carbon dioxide. The two electrons that are generated as a result of pyruvate decarboxylation are used in the reduction of low potential ferredoxins, which provide reducing equivalents for central metabolism. Also catalyzes the reverse reaction, i.e. the synthesis of pyruvate from acetyl-CoA and carbon dioxide. Appears to function physiologically in both directions. The oxidation of pyruvate by PFOR is required to connect glycolysis and the Wood-Ljungdahl pathway of reductive acetogenesis. The conversion of acetyl-CoA to pyruvate links the Wood-Ljungdahl pathway of autotrophic CO2 fixation to the reductive tricarboxylic acid cycle. Can use methyl viologen as electron carrier in vitro. This chain is Pyruvate:ferredoxin oxidoreductase, found in Moorella thermoacetica (strain ATCC 39073 / JCM 9320).